We begin with the raw amino-acid sequence, 340 residues long: MARDLIGPALPPGFKARGTAEDEERDPSPVAGPALPPNYKSSSSDSSDSDEDSSSLYEEGNQESEEDDSGPTARKQRKNQDDDDDDDDGFFGPALPPGFKKQDDSPPRPIIGPALPPGFIKSTQKSDKGRDDPGQQETDSSEDEDIIGPMPAKGPVNYNVTTEFEKRAQRMKEKLTKGDDDSSKPIVRESWMTELPPEMKDFGLGPRTFKRRADDTSGDRSIWTDTPADRERKAKETQEARKSSSKKDEEHILSGRDKRLAEQVSSYNESKRSESLMDIHHKKLKSKAAEDKNKPQERIPFDRDKDLKVNRFDEAQKKALIKKSRELNTRFSHGKGNMFL.

Residues 1–304 form a disordered region; that stretch reads MARDLIGPAL…PQERIPFDRD (304 aa). N-acetylalanine is present on A2. A GPALPP motif 1 motif is present at residues 7-12; it reads GPALPP. S28 carries the post-translational modification Phosphoserine. Residues 32 to 37 carry the GPALPP motif 2 motif; the sequence is GPALPP. Acidic residues predominate over residues 60–69; it reads GNQESEEDDS. A GPALPP motif 3 motif is present at residues 92–97; sequence GPALPP. Phosphoserine is present on S105. Over residues 107-116 the composition is skewed to pro residues; sequence PRPIIGPALP. The GPALPP motif 4 motif lies at 112–117; that stretch reads GPALPP. The span at 124–133 shows a compositional bias: basic and acidic residues; the sequence is QKSDKGRDDP. Position 138 is a phosphothreonine (T138). Phosphoserine is present on residues S140 and S141. Composition is skewed to basic and acidic residues over residues 163–187, 227–261, 269–279, and 287–304; these read EFEK…KPIV, PADR…KRLA, ESKRSESLMDI, and KAAE…FDRD. K271 participates in a covalent cross-link: Glycyl lysine isopeptide (Lys-Gly) (interchain with G-Cter in SUMO2). A Glycyl lysine isopeptide (Lys-Gly) (interchain with G-Cter in SUMO2) cross-link involves residue K308.

In Homo sapiens (Human), this protein is GPALPP motifs-containing protein 1 (GPALPP1).